The sequence spans 111 residues: uncharacterized protein (111 aa).

The next 3 membrane-spanning stretches (helical) occupy residues 22-42 (ASLICLHTLSLVSFSFLANIT), 48-68 (LTPAGIIESIPVVFTAVVSVL), and 75-95 (VLVTVSVVLFKISLGAIPKIL).

It is found in the membrane. This is an uncharacterized protein from Saccharomyces cerevisiae (strain ATCC 204508 / S288c) (Baker's yeast).